Consider the following 113-residue polypeptide: Mini zinc finger protein 3 (113 aa).

The ZF-HD dimerization-type; degenerate zinc finger occupies 24–83; sequence YGECRRNHAASTGGHAVDGCREFIAAEDGGGGNSTGAVGVAAAALKCAACGCHRSFHRRV. The disordered stretch occupies residues 93-113; the sequence is DCDSGDTSSSSPSSSSSLSSE. Residues 97-113 are compositionally biased toward low complexity; sequence GDTSSSSPSSSSSLSSE.

As to quaternary structure, homo- and heterodimers.

The protein resides in the cytoplasm. Its function is as follows. Inhibits zinc finger homeodomain (ZHD) transcription factors, by interacting with them to prevent both their nuclear localization and their DNA-binding properties. This is Mini zinc finger protein 3 (MIF3) from Oryza sativa subsp. indica (Rice).